A 155-amino-acid chain; its full sequence is Small ribosomal subunit protein uS7cz/uS7cy (155 aa).

It belongs to the universal ribosomal protein uS7 family. Part of the 30S ribosomal subunit.

The protein localises to the plastid. Its subcellular location is the chloroplast. Its function is as follows. One of the primary rRNA binding proteins, it binds directly to 16S rRNA where it nucleates assembly of the head domain of the 30S subunit. The chain is Small ribosomal subunit protein uS7cz/uS7cy (rps7-A) from Jasminum nudiflorum (Winter jasmine).